A 459-amino-acid polypeptide reads, in one-letter code: Probable rhamnogalacturonase C (459 aa).

Positions 1–18 (MRASILPLTLFLATLAGA) are cleaved as a signal peptide. Residues asparagine 36, asparagine 64, asparagine 77, asparagine 140, and asparagine 155 are each glycosylated (N-linked (GlcNAc...) asparagine). Cysteine 39 and cysteine 65 are disulfide-bonded. Aspartate 216 (proton donor) is an active-site residue. Cysteine 218 and cysteine 235 are disulfide-bonded. N-linked (GlcNAc...) asparagine glycosylation is found at asparagine 236 and asparagine 251. Histidine 290 is an active-site residue. Asparagine 315 carries an N-linked (GlcNAc...) asparagine glycan. A disulfide bridge connects residues cysteine 337 and cysteine 343. A glycan (N-linked (GlcNAc...) asparagine) is linked at asparagine 356. An intrachain disulfide couples cysteine 365 to cysteine 374.

This sequence belongs to the glycosyl hydrolase 28 family.

The protein resides in the secreted. Pectinolytic enzymes consist of four classes of enzymes: pectine lyase, polygalacturonase, pectin methylesterase and rhamnogalacturonase. Hydrolyzes alpha-D-galacturonopyranosyl-(1,2)-alpha-L-rhamnopyranosyl linkages in the backbone of the hairy regions of pectins. The sequence is that of Probable rhamnogalacturonase C (rhgC) from Aspergillus niger (strain ATCC MYA-4892 / CBS 513.88 / FGSC A1513).